The following is a 197-amino-acid chain: Holliday junction branch migration complex subunit RuvA (197 aa).

The domain I stretch occupies residues 1–63 (MIEFIRGYVD…EDVLALYGFH (63 aa)). Residues 64–142 (TRQERMLFAK…AIVPDAFPNL (79 aa)) form a domain II region. Positions 143-149 (FTEPLEE) are flexible linker. The tract at residues 149-197 (ETNALSEAIEALKALGYADKEIQKVVPMLRQERLSTEGYIKLALQKLLK) is domain III.

The protein belongs to the RuvA family. As to quaternary structure, homotetramer. Forms an RuvA(8)-RuvB(12)-Holliday junction (HJ) complex. HJ DNA is sandwiched between 2 RuvA tetramers; dsDNA enters through RuvA and exits via RuvB. An RuvB hexamer assembles on each DNA strand where it exits the tetramer. Each RuvB hexamer is contacted by two RuvA subunits (via domain III) on 2 adjacent RuvB subunits; this complex drives branch migration. In the full resolvosome a probable DNA-RuvA(4)-RuvB(12)-RuvC(2) complex forms which resolves the HJ.

The protein resides in the cytoplasm. The RuvA-RuvB-RuvC complex processes Holliday junction (HJ) DNA during genetic recombination and DNA repair, while the RuvA-RuvB complex plays an important role in the rescue of blocked DNA replication forks via replication fork reversal (RFR). RuvA specifically binds to HJ cruciform DNA, conferring on it an open structure. The RuvB hexamer acts as an ATP-dependent pump, pulling dsDNA into and through the RuvAB complex. HJ branch migration allows RuvC to scan DNA until it finds its consensus sequence, where it cleaves and resolves the cruciform DNA. The polypeptide is Holliday junction branch migration complex subunit RuvA (Anoxybacillus flavithermus (strain DSM 21510 / WK1)).